Reading from the N-terminus, the 443-residue chain is Chromosome partition protein MukF (443 aa).

Residues 209 to 237 (LDETSGNLRELQDTLNAAGDKLQAQLLRI) are leucine-zipper.

Belongs to the MukF family. Interacts, and probably forms a ternary complex, with MukE and MukB via its C-terminal region. The complex formation is stimulated by calcium or magnesium. It is required for an interaction between MukE and MukB.

It is found in the cytoplasm. The protein localises to the nucleoid. Functionally, involved in chromosome condensation, segregation and cell cycle progression. May participate in facilitating chromosome segregation by condensation DNA from both sides of a centrally located replisome during cell division. Not required for mini-F plasmid partitioning. Probably acts via its interaction with MukB and MukE. Overexpression results in anucleate cells. It has a calcium binding activity. This chain is Chromosome partition protein MukF, found in Actinobacillus pleuropneumoniae serotype 7 (strain AP76).